We begin with the raw amino-acid sequence, 415 residues long: Esterase FrsA (415 aa).

A disordered region spans residues 1-23; it reads MANRNLSESLFKPRQKHQETSTL.

It belongs to the FrsA family.

The enzyme catalyses a carboxylic ester + H2O = an alcohol + a carboxylate + H(+). Its function is as follows. Catalyzes the hydrolysis of esters. In Photorhabdus laumondii subsp. laumondii (strain DSM 15139 / CIP 105565 / TT01) (Photorhabdus luminescens subsp. laumondii), this protein is Esterase FrsA.